We begin with the raw amino-acid sequence, 1196 residues long: Ice nucleation protein (1196 aa).

An octapeptide periodicity region spans residues 172-1147; that stretch reads ATYGSTLSGD…LSAGEDSTLI (976 aa). Disordered regions lie at residues 269 to 304, 319 to 352, and 415 to 442; these read GYGSTQTSGEDSSLTAGYGSTQTAQEGSNLTAGYGS, GSTQTSGGDSSLTAGYGSTQTAQEGSNLTSGYGS, and GSTQTSGSDSSLTAGYGSTQTAQEGSNL. Composition is skewed to polar residues over residues 271–298 and 319–346; these read GSTQTSGEDSSLTAGYGSTQTAQEGSNL and GSTQTSGGDSSLTAGYGSTQTAQEGSNL.

Belongs to the bacterial ice nucleation protein family. In terms of assembly, membrane environment or aggregation seems to be required for ice nucleation activity.

Its subcellular location is the cell outer membrane. Ice nucleation proteins enable bacteria to nucleate crystallization in supercooled water. This chain is Ice nucleation protein (inaV), found in Pseudomonas syringae.